The sequence spans 497 residues: Cytoplasmic dynein 1 light intermediate chain 2 (497 aa).

Residue 61–68 (GEDGSGKT) participates in ATP binding. 4 disordered regions span residues 187 to 206 (PEEGCQGSPQRRGPLTSGSD), 366 to 408 (QQES…IKNN), 423 to 461 (LSKKTGSPGSPSAGGVQSTAKKSGTEGEPQSFRSLTEQC), and 474 to 497 (QEELDRMTRKPDSMVTNSSTENEA). Ser-194, Ser-369, and Ser-377 each carry phosphoserine. Arg-383 carries the omega-N-methylarginine modification. Positions 423 to 444 (LSKKTGSPGSPSAGGVQSTAKK) are enriched in polar residues. Thr-427 bears the Phosphothreonine mark. Phosphoserine is present on residues Ser-429 and Ser-432. Residues 476-485 (ELDRMTRKPD) show a composition bias toward basic and acidic residues. Residues 487–497 (MVTNSSTENEA) are compositionally biased toward polar residues.

It belongs to the dynein light intermediate chain family. In terms of assembly, homodimer. The cytoplasmic dynein 1 complex consists of two catalytic heavy chains (HCs) and a number of non-catalytic subunits presented by intermediate chains (ICs), light intermediate chains (LICs) and light chains (LCs); the composition seems to vary in respect to the IC, LIC and LC composition. The heavy chain homodimer serves as a scaffold for the probable homodimeric assembly of the respective non-catalytic subunits. The ICs and LICs bind directly to the HC dimer and the LCs assemble on the IC dimer. Self-associates. Interacts with DYNC1H1; DYNC1LI1 and DYNC1LI2 bind mutually exclusive to DYNC1H1. Ubiquitous.

It is found in the cytoplasm. Its subcellular location is the cytoskeleton. Its function is as follows. Acts as one of several non-catalytic accessory components of the cytoplasmic dynein 1 complex that are thought to be involved in linking dynein to cargos and to adapter proteins that regulate dynein function. Cytoplasmic dynein 1 acts as a motor for the intracellular retrograde motility of vesicles and organelles along microtubules. May play a role in binding dynein to membranous organelles or chromosomes. The chain is Cytoplasmic dynein 1 light intermediate chain 2 (Dync1li2) from Rattus norvegicus (Rat).